Consider the following 460-residue polypeptide: Serine--tRNA ligase (460 aa).

An L-serine-binding site is contributed by 242–244 (TAE). ATP contacts are provided by residues 273–275 (RRE) and Val289. Glu296 serves as a coordination point for L-serine. An ATP-binding site is contributed by 369–372 (EVSS). Ser405 serves as a coordination point for L-serine.

It belongs to the class-II aminoacyl-tRNA synthetase family. Type-1 seryl-tRNA synthetase subfamily. In terms of assembly, homodimer. The tRNA molecule binds across the dimer.

The protein localises to the cytoplasm. It carries out the reaction tRNA(Ser) + L-serine + ATP = L-seryl-tRNA(Ser) + AMP + diphosphate + H(+). The catalysed reaction is tRNA(Sec) + L-serine + ATP = L-seryl-tRNA(Sec) + AMP + diphosphate + H(+). The protein operates within aminoacyl-tRNA biosynthesis; selenocysteinyl-tRNA(Sec) biosynthesis; L-seryl-tRNA(Sec) from L-serine and tRNA(Sec): step 1/1. Functionally, catalyzes the attachment of serine to tRNA(Ser). Is also able to aminoacylate tRNA(Sec) with serine, to form the misacylated tRNA L-seryl-tRNA(Sec), which will be further converted into selenocysteinyl-tRNA(Sec). This chain is Serine--tRNA ligase, found in Haloquadratum walsbyi (strain DSM 16790 / HBSQ001).